The sequence spans 1943 residues: Sickle tail protein homolog (1943 aa).

Disordered regions lie at residues 1 to 79 and 112 to 177; these read MEEN…KEIL and QERL…RSTN. Over residues 38-47 the composition is skewed to basic and acidic residues; that stretch reads AECRRTKERL. Over residues 48-62 the composition is skewed to polar residues; sequence SNGNSRGSVSKSSRN. At Ser-169 the chain carries Phosphoserine. Phosphotyrosine is present on Tyr-244. The tract at residues 290-331 is disordered; sequence ARGDGPGAPRPGSTAHPPHAIPNSPPSTPVPHSMPPSPSRIP. Residues 308–328 are compositionally biased toward pro residues; the sequence is HAIPNSPPSTPVPHSMPPSPS. The O-linked (GlcNAc) serine glycan is linked to Ser-357. 2 positions are modified to phosphoserine: Ser-361 and Ser-365. Tyr-393 carries the post-translational modification Phosphotyrosine. The disordered stretch occupies residues 456 to 476; the sequence is RKYPDSHLPTLGSKTPPASPH. Thr-470 carries the phosphothreonine modification. Phosphoserine is present on residues Ser-474 and Ser-526. 2 coiled-coil regions span residues 557 to 581 and 644 to 685; these read RETR…QSAL and MSLL…ELEI. Residue Ser-809 is modified to Phosphoserine. Residues 848–874 are disordered; the sequence is VLKSQEEAAHTSGQPFHSTGAPGDAKS. Positions 957–985 form a coiled coil; that stretch reads SAKNRAVSIEKAEKKWEEKRQNLDHYNGK. Disordered stretches follow at residues 1003-1230, 1305-1329, and 1352-1377; these read PNLE…SDAS, KTKE…TESS, and PKEA…TEEN. Phosphoserine occurs at positions 1027, 1030, 1033, and 1044. The span at 1044–1053 shows a compositional bias: pro residues; sequence SPPPPPPPPR. Basic and acidic residues-rich tracts occupy residues 1155 to 1167, 1174 to 1192, and 1305 to 1318; these read EPSR…KDTR, PKEK…KSDV, and KTKE…DKCH. Over residues 1368 to 1377 the composition is skewed to polar residues; that stretch reads SSSSSPTEEN. Ser-1461 carries the post-translational modification Phosphoserine. Positions 1464–1490 form a coiled coil; that stretch reads FEECDEELERMMMEEKIEEEEEEENGD. Disordered regions lie at residues 1481–1572, 1606–1660, and 1677–1943; these read EEEE…PKKK, EEEE…EIRK, and ENTI…KETS. 2 stretches are compositionally biased toward polar residues: residues 1491-1501 and 1512-1533; these read SVVQNNNTSQM and RTGQ…TRNP. 2 stretches are compositionally biased toward basic and acidic residues: residues 1539–1548 and 1612–1625; these read NRTELNKFSH and GTLK…RFEI. A compositionally biased stretch (polar residues) spans 1643–1653; it reads QPSIESTSPIS. Residues 1656–1686 adopt a coiled-coil conformation; that stretch reads DEIRKNTYRTLDSLEQTIKQLENTISEMSPK. Polar residues-rich tracts occupy residues 1691-1706 and 1731-1747; these read TSCS…SSHI and IPSA…QTSR. A Phosphoserine modification is found at Ser-1739. A compositionally biased stretch (basic and acidic residues) spans 1763–1775; the sequence is KPGKQSKLQDPRQ. The segment covering 1806–1825 has biased composition (low complexity); it reads SPSSGKSSSLPSSSGDSSNL. Composition is skewed to polar residues over residues 1834–1843 and 1853–1869; these read SIASNPLSPQ and LIPS…SLTH. Ser-1841 bears the Phosphoserine mark. Residues 1892–1905 show a composition bias toward low complexity; the sequence is SFSSSPPSPASSVS. 3 positions are modified to phosphoserine: Ser-1896, Ser-1899, and Ser-1902. The segment covering 1906–1943 has biased composition (polar residues); that stretch reads LNQGAKGTRTIHTPSLTSYKAQNGSSSKATPSTAKETS.

In terms of assembly, interacts with CPNE4 (via VWFA domain).

The protein localises to the cytoplasm. The protein resides in the cytoskeleton. Its subcellular location is the microtubule organizing center. It is found in the centrosome. Its function is as follows. Required for normal development of intervertebral disks. In Homo sapiens (Human), this protein is Sickle tail protein homolog (KIAA1217).